The sequence spans 237 residues: Pheromone-regulated membrane protein 8 (237 aa).

At 1–47 (MQTPSENTNAKSDSLDEPGAYLIEENVALPKDIFHSYLSYWIYEAAH) the chain is on the cytoplasmic side. A helical transmembrane segment spans residues 48–68 (CTPVMLLSLVIGVLISIIILF). Topologically, residues 69 to 74 (HDNENC) are extracellular. A helical transmembrane segment spans residues 75–95 (VGVSVGFLLIFSGILVIVLIL). At 96–237 (RFGPQISDED…QEYPGVDEFF (142 aa)) the chain is on the cytoplasmic side. The interval 174–201 (SSASNVKDAQSNDETAGTPNEAAESSSF) is disordered. The tract at residues 236–237 (FF) is COPII binding.

The protein belongs to the DUP/COS family. As to quaternary structure, interacts with PRM9. Binds to SEC23/24 of COPII coated vesicles.

It is found in the membrane. The protein localises to the endoplasmic reticulum. Its function is as follows. May be involved in endoplasmic reticulum exit trafficking of proteins. The polypeptide is Pheromone-regulated membrane protein 8 (PRM8) (Saccharomyces cerevisiae (strain ATCC 204508 / S288c) (Baker's yeast)).